The primary structure comprises 386 residues: Alanine racemase (386 aa).

The active-site Proton acceptor; specific for D-alanine is lysine 38. Lysine 38 bears the N6-(pyridoxal phosphate)lysine mark. Position 136 (arginine 136) interacts with substrate. The active-site Proton acceptor; specific for L-alanine is the tyrosine 267. Methionine 315 provides a ligand contact to substrate.

Belongs to the alanine racemase family. The cofactor is pyridoxal 5'-phosphate.

It carries out the reaction L-alanine = D-alanine. Its pathway is amino-acid biosynthesis; D-alanine biosynthesis; D-alanine from L-alanine: step 1/1. Functionally, catalyzes the interconversion of L-alanine and D-alanine. May also act on other amino acids. The protein is Alanine racemase (alr) of Clostridium perfringens (strain ATCC 13124 / DSM 756 / JCM 1290 / NCIMB 6125 / NCTC 8237 / Type A).